The chain runs to 139 residues: Putative pre-16S rRNA nuclease (139 aa).

Belongs to the YqgF nuclease family.

The protein resides in the cytoplasm. In terms of biological role, could be a nuclease involved in processing of the 5'-end of pre-16S rRNA. The polypeptide is Putative pre-16S rRNA nuclease (Caldanaerobacter subterraneus subsp. tengcongensis (strain DSM 15242 / JCM 11007 / NBRC 100824 / MB4) (Thermoanaerobacter tengcongensis)).